Here is a 529-residue protein sequence, read N- to C-terminus: Bifunctional purine biosynthesis protein PurH (529 aa).

In terms of domain architecture, MGS-like spans Met-1–Val-148.

It belongs to the PurH family.

It carries out the reaction (6R)-10-formyltetrahydrofolate + 5-amino-1-(5-phospho-beta-D-ribosyl)imidazole-4-carboxamide = 5-formamido-1-(5-phospho-D-ribosyl)imidazole-4-carboxamide + (6S)-5,6,7,8-tetrahydrofolate. The catalysed reaction is IMP + H2O = 5-formamido-1-(5-phospho-D-ribosyl)imidazole-4-carboxamide. The protein operates within purine metabolism; IMP biosynthesis via de novo pathway; 5-formamido-1-(5-phospho-D-ribosyl)imidazole-4-carboxamide from 5-amino-1-(5-phospho-D-ribosyl)imidazole-4-carboxamide (10-formyl THF route): step 1/1. It participates in purine metabolism; IMP biosynthesis via de novo pathway; IMP from 5-formamido-1-(5-phospho-D-ribosyl)imidazole-4-carboxamide: step 1/1. The sequence is that of Bifunctional purine biosynthesis protein PurH from Shewanella piezotolerans (strain WP3 / JCM 13877).